The primary structure comprises 647 residues: Knirps-related protein (647 aa).

The nuclear receptor DNA-binding region spans 11 to 87 (NQTCKVCGEP…VGMSKSGSRY (77 aa)). 2 NR C4-type zinc fingers span residues 14–34 (CKVC…CEGC) and 51–75 (CKNN…LKKC). Disordered stretches follow at residues 111-142 (MAAH…KGMS), 196-274 (HKHP…LSPF), 340-383 (GAGQ…LLTN), and 402-600 (SQQQ…NSIL). Residues 120-134 (AGGGSSGGSGGGQGM) are compositionally biased toward gly residues. 2 stretches are compositionally biased toward low complexity: residues 200–223 (VVAS…VSSV) and 232–247 (GGKS…ADGS). Residues 248-260 (HSGGGGGGGGGVT) show a composition bias toward gly residues. Composition is skewed to polar residues over residues 370–381 (SPSTHANNNHLL) and 420–432 (DYSI…PNSE). Basic and acidic residues-rich tracts occupy residues 433–443 (SGRERVKSRQN) and 480–491 (QEERTPAGEDPR). Over residues 502–519 (LSMKTTGSSLSSKSSSPE) the composition is skewed to low complexity. Acidic residues predominate over residues 520–541 (IEPETEISSDVEKNDTDDDDED). Basic and acidic residues predominate over residues 542–556 (LKVTPEEEISVRETA). A compositionally biased stretch (polar residues) spans 567–579 (TTETAKTSIENTH). Over residues 580–599 (NNNNSISNNNNNNNNNNNSI) the composition is skewed to low complexity.

This sequence belongs to the nuclear hormone receptor family. NR0 subfamily.

The protein localises to the nucleus. In Drosophila melanogaster (Fruit fly), this protein is Knirps-related protein (knrl).